The chain runs to 490 residues: NAD/NADP-dependent betaine aldehyde dehydrogenase (490 aa).

K(+) is bound by residues Thr-26, Ile-27, and Asp-93. 150–153 (GAWN) contributes to the NADPH binding site. The active-site Charge relay system is the Lys-162. 176 to 179 (KPSE) lines the NADPH pocket. Val-180 is a binding site for K(+). NADPH contacts are provided by residues Gly-209 and 230-233 (GTST). K(+) is bound at residue Leu-246. Residue Glu-252 is the Proton acceptor of the active site. NADPH is bound by residues Cys-286 and Glu-387. The Nucleophile role is filled by Cys-286. Position 286 is a cysteine sulfenic acid (-SOH) (Cys-286). K(+) contacts are provided by Lys-457 and Gly-460. Catalysis depends on Glu-464, which acts as the Charge relay system.

This sequence belongs to the aldehyde dehydrogenase family. Dimer of dimers. K(+) is required as a cofactor.

It carries out the reaction betaine aldehyde + NAD(+) + H2O = glycine betaine + NADH + 2 H(+). The catalysed reaction is betaine aldehyde + NADP(+) + H2O = glycine betaine + NADPH + 2 H(+). It participates in amine and polyamine biosynthesis; betaine biosynthesis via choline pathway; betaine from betaine aldehyde: step 1/1. In terms of biological role, involved in the biosynthesis of the osmoprotectant glycine betaine. Catalyzes the irreversible oxidation of betaine aldehyde to the corresponding acid. In P.aeruginosa this reaction is a compulsory step in the assimilation of carbon and nitrogen when bacteria are growing in choline or choline precursors. Can use NADP(+) with similar efficiency to NAD(+), a property that can be used by the bacterium to produce the NADPH needed to combat the oxidative stress imposed by the host defenses. The chain is NAD/NADP-dependent betaine aldehyde dehydrogenase from Pseudomonas aeruginosa (strain ATCC 15692 / DSM 22644 / CIP 104116 / JCM 14847 / LMG 12228 / 1C / PRS 101 / PAO1).